We begin with the raw amino-acid sequence, 390 residues long: Putative 2-isopropylmalate synthase (390 aa).

The 263-residue stretch at 5-267 folds into the Pyruvate carboxyltransferase domain; it reads IIIFDTTLRD…KTNIKYQEIY (263 aa). Residues Asp-14, His-202, His-204, and Asn-238 each coordinate Mn(2+).

The protein belongs to the alpha-IPM synthase/homocitrate synthase family. LeuA type 1 subfamily. As to quaternary structure, homodimer. Mn(2+) is required as a cofactor.

It is found in the cytoplasm. It carries out the reaction 3-methyl-2-oxobutanoate + acetyl-CoA + H2O = (2S)-2-isopropylmalate + CoA + H(+). It functions in the pathway amino-acid biosynthesis; L-leucine biosynthesis; L-leucine from 3-methyl-2-oxobutanoate: step 1/4. Its function is as follows. Catalyzes the condensation of the acetyl group of acetyl-CoA with 3-methyl-2-oxobutanoate (2-ketoisovalerate) to form 3-carboxy-3-hydroxy-4-methylpentanoate (2-isopropylmalate). The chain is Putative 2-isopropylmalate synthase from Buchnera aphidicola subsp. Baizongia pistaciae (strain Bp).